The primary structure comprises 100 residues: MIPLQHGLILAAILFVLGLTGLIIRRNLLFMLISLEVMINAAALAFVVAGSYWGQADGQVMYILAITLAAAEASIGLALLLQLYRRRHTLNIDTVSEMRG.

The next 3 membrane-spanning stretches (helical) occupy residues 4 to 24 (LQHG…GLII), 28 to 48 (LLFM…AFVV), and 60 to 80 (VMYI…LALL).

It belongs to the complex I subunit 4L family. NDH-1 is composed of 13 different subunits. Subunits NuoA, H, J, K, L, M, N constitute the membrane sector of the complex.

It is found in the cell inner membrane. It catalyses the reaction a quinone + NADH + 5 H(+)(in) = a quinol + NAD(+) + 4 H(+)(out). Functionally, NDH-1 shuttles electrons from NADH, via FMN and iron-sulfur (Fe-S) centers, to quinones in the respiratory chain. The immediate electron acceptor for the enzyme in this species is believed to be ubiquinone. Couples the redox reaction to proton translocation (for every two electrons transferred, four hydrogen ions are translocated across the cytoplasmic membrane), and thus conserves the redox energy in a proton gradient. This is NADH-quinone oxidoreductase subunit K from Yersinia enterocolitica serotype O:8 / biotype 1B (strain NCTC 13174 / 8081).